The sequence spans 29 residues: Potassium-transporting ATPase KdpF subunit (29 aa).

Residues 2–22 traverse the membrane as a helical segment; that stretch reads LIGEAVLAVVTVAVVAYLTYV.

Belongs to the KdpF family. In terms of assembly, the system is composed of three essential subunits: KdpA, KdpB and KdpC. The complex also contains KdpF, a small non-essential subunit.

Its subcellular location is the cell membrane. Functionally, part of the high-affinity ATP-driven potassium transport (or Kdp) system, which catalyzes the hydrolysis of ATP coupled with the electrogenic transport of potassium into the cytoplasm. This subunit may be involved in stabilization of the complex. The Kdp system is essential for growth under K(+) limitation, and for survival under desiccation and salt crystal inclusion. The protein is Potassium-transporting ATPase KdpF subunit of Halobacterium salinarum (strain ATCC 29341 / DSM 671 / R1).